A 210-amino-acid polypeptide reads, in one-letter code: Protein-methionine-sulfoxide reductase heme-binding subunit MsrQ (210 aa).

A run of 6 helical transmembrane segments spans residues 8 to 28 (LAVF…AWIF), 37 to 57 (VLVE…MSMT), 75 to 95 (LGLW…LFIL), 110 to 130 (PYII…VTSN), 147 to 167 (LIYV…RADL), and 169 to 189 (EWAL…PMIT).

It belongs to the MsrQ family. Heterodimer of a catalytic subunit (MsrP) and a heme-binding subunit (MsrQ). FMN is required as a cofactor. The cofactor is heme b.

The protein resides in the cell inner membrane. Part of the MsrPQ system that repairs oxidized periplasmic proteins containing methionine sulfoxide residues (Met-O), using respiratory chain electrons. Thus protects these proteins from oxidative-stress damage caused by reactive species of oxygen and chlorine generated by the host defense mechanisms. MsrPQ is essential for the maintenance of envelope integrity under bleach stress, rescuing a wide series of structurally unrelated periplasmic proteins from methionine oxidation. MsrQ provides electrons for reduction to the reductase catalytic subunit MsrP, using the quinone pool of the respiratory chain. This chain is Protein-methionine-sulfoxide reductase heme-binding subunit MsrQ, found in Pseudomonas savastanoi pv. phaseolicola (strain 1448A / Race 6) (Pseudomonas syringae pv. phaseolicola (strain 1448A / Race 6)).